The sequence spans 81 residues: Defensin-like protein 153 (81 aa).

A signal peptide spans 1–26 (MKNVSQVSVAVLLIFSILVLGIGVQG). Disulfide bonds link C30–C81, C41–C60, C46–C75, and C50–C77.

It belongs to the DEFL family.

It localises to the secreted. The protein is Defensin-like protein 153 (LCR31) of Arabidopsis thaliana (Mouse-ear cress).